The following is an 838-amino-acid chain: Periplasmic nitrate reductase (838 aa).

A signal peptide (tat-type signal) is located at residues 1–29; sequence MDMSRRTLLKAQAAAAAAAVAGIDLPAEA. The 4Fe-4S Mo/W bis-MGD-type domain maps to 40–96; that stretch reads LKWSKAPCRFCGTGCGVMVGVKDGRVVATHGDMQAEVNRGLNCVKGYFLSKIMYGAD. Residues Cys47, Cys50, Cys54, and Cys82 each coordinate [4Fe-4S] cluster. Residues Lys84, Gln151, Asn176, Cys180, 213-220, 244-248, 263-265, Met374, Gln378, Asn484, 510-511, Lys533, Asp560, and 720-729 each bind Mo-bis(molybdopterin guanine dinucleotide); these read WGSNMAEM, STYEH, GTD, SD, and TGRVLEHWHS. Phe796 contributes to the substrate binding site. 2 residues coordinate Mo-bis(molybdopterin guanine dinucleotide): Asn804 and Lys821.

The protein belongs to the prokaryotic molybdopterin-containing oxidoreductase family. NasA/NapA/NarB subfamily. Component of the periplasmic nitrate reductase NapAB complex composed of NapA and NapB. The cofactor is [4Fe-4S] cluster. Requires Mo-bis(molybdopterin guanine dinucleotide) as cofactor. Post-translationally, predicted to be exported by the Tat system. The position of the signal peptide cleavage has not been experimentally proven.

It localises to the periplasm. It carries out the reaction 2 Fe(II)-[cytochrome] + nitrate + 2 H(+) = 2 Fe(III)-[cytochrome] + nitrite + H2O. Functionally, catalytic subunit of the periplasmic nitrate reductase complex NapAB. Receives electrons from NapB and catalyzes the reduction of nitrate to nitrite. The polypeptide is Periplasmic nitrate reductase (Methylobacterium sp. (strain 4-46)).